A 373-amino-acid chain; its full sequence is Muconate cycloisomerase 1 (373 aa).

The active site involves Lys169. The active-site Proton acceptor is the Lys169. Residues Asp198, Glu224, and Asp249 each coordinate Mn(2+). The active-site Proton donor is Glu327.

The protein belongs to the mandelate racemase/muconate lactonizing enzyme family. Requires Mn(2+) as cofactor.

It catalyses the reaction (S)-muconolactone = cis,cis-muconate + H(+). The chain is Muconate cycloisomerase 1 (catB) from Rhodococcus opacus (Nocardia opaca).